The sequence spans 313 residues: Ribosomal RNA small subunit methyltransferase H (313 aa).

Residues 35–37 (GGH), Asp-55, Phe-80, Asp-102, and Gln-109 contribute to the S-adenosyl-L-methionine site.

This sequence belongs to the methyltransferase superfamily. RsmH family.

The protein resides in the cytoplasm. It catalyses the reaction cytidine(1402) in 16S rRNA + S-adenosyl-L-methionine = N(4)-methylcytidine(1402) in 16S rRNA + S-adenosyl-L-homocysteine + H(+). Its function is as follows. Specifically methylates the N4 position of cytidine in position 1402 (C1402) of 16S rRNA. This chain is Ribosomal RNA small subunit methyltransferase H, found in Shewanella denitrificans (strain OS217 / ATCC BAA-1090 / DSM 15013).